Here is a 771-residue protein sequence, read N- to C-terminus: Probable cation-transporting ATPase G (771 aa).

The HMA domain maps to 19 to 86 (GRMRVQATGF…AIIDAETVPA (68 aa)). Residues 72-92 (AAILSAIIDAETVPAAAVPAY) form a helical membrane-spanning segment. The disordered stretch occupies residues 122–143 (DVAAQPSGETSDACCDGEDNED). 5 consecutive transmembrane segments (helical) span residues 163-183 (VLLT…VVLG), 209-229 (VGVG…GELG), 330-350 (VFAG…ATAA), 387-407 (MIAA…LVWI), and 411-431 (LVVL…VTVV). D462 (4-aspartylphosphate intermediate) is an active-site residue. Mg(2+) contacts are provided by D651 and D655. 2 helical membrane passes run 657 to 677 (PALA…DVAI) and 716 to 736 (IITV…AVVL).

The protein belongs to the cation transport ATPase (P-type) (TC 3.A.3) family. Type IB subfamily.

Its subcellular location is the cell membrane. It carries out the reaction ATP + H2O = ADP + phosphate + H(+). This chain is Probable cation-transporting ATPase G (ctpG), found in Mycobacterium bovis (strain ATCC BAA-935 / AF2122/97).